A 232-amino-acid polypeptide reads, in one-letter code: Aspartate racemase (232 aa).

Position 49-51 (49-51 (DRT)) interacts with substrate. The Proton donor/acceptor role is filled by Cys84. Substrate contacts are provided by residues 85–87 (NTA) and Lys166. The active-site Proton donor/acceptor is Cys195.

It belongs to the aspartate/glutamate racemases family.

It catalyses the reaction L-aspartate = D-aspartate. The protein is Aspartate racemase of Thermococcus sp. (strain KS-8).